Consider the following 352-residue polypeptide: C-X-C chemokine receptor type 4 (352 aa).

Residues M1–Y21 form an important for chemokine binding and signaling region. Topologically, residues M1 to R38 are extracellular. Y7 carries the sulfotyrosine modification. N11 carries N-linked (GlcNAc...) asparagine glycosylation. A Sulfotyrosine modification is found at Y12. O-linked (Xyl...) (chondroitin sulfate) serine glycosylation is present at S18. Y21 carries the post-translational modification Sulfotyrosine. 2 disulfides stabilise this stretch: C28-C274 and C109-C186. Residues I39–M63 traverse the membrane as a helical segment. Residues G64–R77 are Cytoplasmic-facing. A helical membrane pass occupies residues L78–V99. Residues W94–D97 form a chemokine binding region. The Extracellular portion of the chain corresponds to A100–K110. Residues A111–I130 form a helical membrane-spanning segment. The tract at residues H113–T117 is chemokine binding. The Cytoplasmic portion of the chain corresponds to S131 to K154. The short motif at D133–Y135 is the Important for signaling element. Residues Y135 to P147 are involved in dimerization; when bound to chemokine. A helical transmembrane segment spans residues V155–F174. Over A175 to W195 the chain is Extracellular. The chemokine binding, important for signaling stretch occupies residues C186 to Y190. Residues P191–L210 form an involved in dimerization region. Residues V196–L216 traverse the membrane as a helical segment. At S217 to T241 the chain is on the cytoplasmic side. Residues V242 to I261 form a helical membrane-spanning segment. Residues D262–K282 are Extracellular-facing. The tract at residues L266–E268 is involved in dimerization. Residues W283–Y302 traverse the membrane as a helical segment. Over A303–S352 the chain is Cytoplasmic. 2 positions are modified to phosphoserine: S319 and S321. Phosphoserine; by PKC and GRK6 occurs at positions 324 and 325. Residues L329 to S352 are disordered. The residue at position 330 (S330) is a Phosphoserine; by GRK6. A Glycyl lysine isopeptide (Lys-Gly) (interchain with G-Cter in ubiquitin) cross-link involves residue K331. The span at H337–S352 shows a compositional bias: low complexity. Residue S339 is modified to Phosphoserine; by GRK6. Phosphoserine is present on residues S348 and S351.

This sequence belongs to the G-protein coupled receptor 1 family. In terms of assembly, monomer. Can form homodimers. Interacts with CD164. Interacts with ARRB2; the interaction is dependent on the C-terminal phosphorylation of CXCR4 and allows activation of MAPK1 and MAPK3. Interacts with ARR3; the interaction is dependent on the C-terminal phosphorylation of CXCR4 and modulates calcium mobilization. Interacts with RNF113A; the interaction, enhanced by CXCL12, promotes CXCR4 ubiquitination and subsequent degradation. Interacts (via the cytoplasmic C-terminal) with ITCH (via the WW domains I and II); the interaction, enhanced by CXCL12, promotes CXCR4 ubiquitination and leads to its degradation. Interacts with extracellular ubiquitin. Interacts with DBN1; this interaction is enhanced by antigenic stimulation. Following LPS binding, may form a complex with GDF5, HSP90AA1 and HSPA8. In terms of processing, phosphorylated on agonist stimulation. Rapidly phosphorylated on serine and threonine residues in the C-terminal. Phosphorylation at Ser-324 and Ser-325 leads to recruitment of ITCH, ubiquitination and protein degradation. Ubiquitinated after ligand binding, leading to its degradation. Ubiquitinated by ITCH at the cell membrane on agonist stimulation. The ubiquitin-dependent mechanism, endosomal sorting complex required for transport (ESCRT), then targets CXCR4 for lysosomal degradation. This process is dependent also on prior Ser-/Thr-phosphorylation in the C-terminal of CXCR4. Also binding of ARRB1 to STAM negatively regulates CXCR4 sorting to lysosomes though modulating ubiquitination of SFR5S. Post-translationally, sulfation is required for efficient binding of CXCL12/SDF-1alpha and promotes its dimerization. In terms of processing, O- and N-glycosylated. N-glycosylation can mask coreceptor function. The O-glycosylation chondroitin sulfate attachment does not affect interaction with CXCL12/SDF-1alpha nor its coreceptor activity.

The protein localises to the cell membrane. It localises to the cell junction. Its subcellular location is the early endosome. It is found in the late endosome. The protein resides in the lysosome. Its function is as follows. Receptor for the C-X-C chemokine CXCL12/SDF-1 that transduces a signal by increasing intracellular calcium ion levels and enhancing MAPK1/MAPK3 activation. Involved in the AKT signaling cascade. Plays a role in regulation of cell migration, e.g. during wound healing. Acts as a receptor for extracellular ubiquitin; leading to enhanced intracellular calcium ions and reduced cellular cAMP levels. Binds bacterial lipopolysaccharide (LPS) et mediates LPS-induced inflammatory response, including TNF secretion by monocytes. Involved in hematopoiesis and in cardiac ventricular septum formation. Also plays an essential role in vascularization of the gastrointestinal tract, probably by regulating vascular branching and/or remodeling processes in endothelial cells. Involved in cerebellar development. In the CNS, could mediate hippocampal-neuron survival. This chain is C-X-C chemokine receptor type 4 (CXCR4), found in Cercocebus atys (Sooty mangabey).